Here is a 299-residue protein sequence, read N- to C-terminus: Small ribosomal subunit protein uS3 (299 aa).

Residues 39–107 (VREYLKAKLK…PVAVNIEEVR (69 aa)) enclose the KH type-2 domain. Positions 214–299 (PVIKTDERED…AVAPGDAKGE (86 aa)) are disordered. The segment covering 217–248 (KTDEREDDRRNRRGPRSDRPAGDRRPPSRDGA) has biased composition (basic and acidic residues). Over residues 257–282 (ADAGAAAPTDKPADGAAPAAADGPKA) the composition is skewed to low complexity.

It belongs to the universal ribosomal protein uS3 family. In terms of assembly, part of the 30S ribosomal subunit. Forms a tight complex with proteins S10 and S14.

In terms of biological role, binds the lower part of the 30S subunit head. Binds mRNA in the 70S ribosome, positioning it for translation. The protein is Small ribosomal subunit protein uS3 of Methylibium petroleiphilum (strain ATCC BAA-1232 / LMG 22953 / PM1).